The following is an 86-amino-acid chain: uncharacterized protein (86 aa).

The protein to C.jejuni CJ0253.

This is an uncharacterized protein from Helicobacter pylori (strain ATCC 700392 / 26695) (Campylobacter pylori).